Here is a 448-residue protein sequence, read N- to C-terminus: Exodeoxyribonuclease 7 large subunit (448 aa).

Belongs to the XseA family. As to quaternary structure, heterooligomer composed of large and small subunits.

Its subcellular location is the cytoplasm. It catalyses the reaction Exonucleolytic cleavage in either 5'- to 3'- or 3'- to 5'-direction to yield nucleoside 5'-phosphates.. Functionally, bidirectionally degrades single-stranded DNA into large acid-insoluble oligonucleotides, which are then degraded further into small acid-soluble oligonucleotides. The sequence is that of Exodeoxyribonuclease 7 large subunit from Geobacillus kaustophilus (strain HTA426).